The following is a 56-amino-acid chain: Large ribosomal subunit protein uL30 (56 aa).

The protein belongs to the universal ribosomal protein uL30 family. As to quaternary structure, part of the 50S ribosomal subunit.

The sequence is that of Large ribosomal subunit protein uL30 from Nitratidesulfovibrio vulgaris (strain ATCC 29579 / DSM 644 / CCUG 34227 / NCIMB 8303 / VKM B-1760 / Hildenborough) (Desulfovibrio vulgaris).